A 602-amino-acid polypeptide reads, in one-letter code: Aspartate--tRNA(Asp/Asn) ligase (602 aa).

E170 is a binding site for L-aspartate. The interval Q194–K197 is aspartate. Residue R216 participates in L-aspartate binding. ATP contacts are provided by residues R216–E218 and Q225. Residue H448 participates in L-aspartate binding. E482 contributes to the ATP binding site. Residue R489 coordinates L-aspartate. Residue G534–R537 participates in ATP binding. Residues G559–K602 are disordered. A compositionally biased stretch (basic and acidic residues) spans Q575–K602.

The protein belongs to the class-II aminoacyl-tRNA synthetase family. Type 1 subfamily. In terms of assembly, homodimer.

The protein resides in the cytoplasm. It catalyses the reaction tRNA(Asx) + L-aspartate + ATP = L-aspartyl-tRNA(Asx) + AMP + diphosphate. Functionally, aspartyl-tRNA synthetase with relaxed tRNA specificity since it is able to aspartylate not only its cognate tRNA(Asp) but also tRNA(Asn). Reaction proceeds in two steps: L-aspartate is first activated by ATP to form Asp-AMP and then transferred to the acceptor end of tRNA(Asp/Asn). The protein is Aspartate--tRNA(Asp/Asn) ligase of Rhodococcus erythropolis (strain PR4 / NBRC 100887).